A 137-amino-acid polypeptide reads, in one-letter code: Seminal plasma sperm motility inhibitor (137 aa).

An N-terminal signal peptide occupies residues 1–21 (MKLGSAIPWALLLSTXTLVST). A disulfide bridge connects residues C30 and C51. The CUB domain occupies 30-131 (CGGFLKNYSG…SSFNVYFYGI (102 aa)). N36 carries an N-linked (GlcNAc...) asparagine glycan.

This sequence belongs to the spermadhesin family. As to expression, seminal plasma or sperm.

It localises to the secreted. Its function is as follows. Inhibitor of sperm motility. This Sus scrofa (Pig) protein is Seminal plasma sperm motility inhibitor (SPMI).